A 300-amino-acid polypeptide reads, in one-letter code: Ribonuclease HIII (300 aa).

The RNase H type-2 domain occupies 86–300; that stretch reads RPRLGVDESG…FNEICDSASA (215 aa). Positions 92, 93, and 196 each coordinate a divalent metal cation.

It belongs to the RNase HII family. RnhC subfamily. Mn(2+) serves as cofactor. It depends on Mg(2+) as a cofactor.

The protein resides in the cytoplasm. The enzyme catalyses Endonucleolytic cleavage to 5'-phosphomonoester.. In terms of biological role, endonuclease that specifically degrades the RNA of RNA-DNA hybrids. This chain is Ribonuclease HIII, found in Chlamydia felis (strain Fe/C-56) (Chlamydophila felis).